Here is a 624-residue protein sequence, read N- to C-terminus: Ferredoxin-fold anticodon-binding domain-containing protein 1 (624 aa).

The FDX-ACB domain maps to 531 to 624 (LYPPCYVHDV…IQQHLYVIPR (94 aa)).

The sequence is that of Ferredoxin-fold anticodon-binding domain-containing protein 1 (FDXACB1) from Homo sapiens (Human).